The chain runs to 212 residues: Pyridoxine/pyridoxamine 5'-phosphate oxidase (212 aa).

Substrate-binding positions include 7–10 (REEY) and Lys-65. FMN-binding positions include 60–65 (RTVLLK), 75–76 (FT), Lys-82, and Gln-104. Positions 122, 126, and 130 each coordinate substrate. Residues 139 to 140 (QS) and Trp-184 each bind FMN. A substrate-binding site is contributed by 190–192 (RLH). Arg-194 is a binding site for FMN.

The protein belongs to the pyridoxamine 5'-phosphate oxidase family. In terms of assembly, homodimer. Requires FMN as cofactor.

The catalysed reaction is pyridoxamine 5'-phosphate + O2 + H2O = pyridoxal 5'-phosphate + H2O2 + NH4(+). The enzyme catalyses pyridoxine 5'-phosphate + O2 = pyridoxal 5'-phosphate + H2O2. It participates in cofactor metabolism; pyridoxal 5'-phosphate salvage; pyridoxal 5'-phosphate from pyridoxamine 5'-phosphate: step 1/1. It functions in the pathway cofactor metabolism; pyridoxal 5'-phosphate salvage; pyridoxal 5'-phosphate from pyridoxine 5'-phosphate: step 1/1. Its function is as follows. Catalyzes the oxidation of either pyridoxine 5'-phosphate (PNP) or pyridoxamine 5'-phosphate (PMP) into pyridoxal 5'-phosphate (PLP). The chain is Pyridoxine/pyridoxamine 5'-phosphate oxidase from Rippkaea orientalis (strain PCC 8801 / RF-1) (Cyanothece sp. (strain PCC 8801)).